The sequence spans 376 residues: UDP-N-acetylglucosamine--N-acetylmuramyl-(pentapeptide) pyrophosphoryl-undecaprenol N-acetylglucosamine transferase (376 aa).

UDP-N-acetyl-alpha-D-glucosamine-binding positions include 11-13, asparagine 117, arginine 160, serine 208, and glutamine 310; that span reads TGG.

This sequence belongs to the glycosyltransferase 28 family. MurG subfamily.

Its subcellular location is the cell inner membrane. It catalyses the reaction di-trans,octa-cis-undecaprenyl diphospho-N-acetyl-alpha-D-muramoyl-L-alanyl-D-glutamyl-meso-2,6-diaminopimeloyl-D-alanyl-D-alanine + UDP-N-acetyl-alpha-D-glucosamine = di-trans,octa-cis-undecaprenyl diphospho-[N-acetyl-alpha-D-glucosaminyl-(1-&gt;4)]-N-acetyl-alpha-D-muramoyl-L-alanyl-D-glutamyl-meso-2,6-diaminopimeloyl-D-alanyl-D-alanine + UDP + H(+). The protein operates within cell wall biogenesis; peptidoglycan biosynthesis. Its function is as follows. Cell wall formation. Catalyzes the transfer of a GlcNAc subunit on undecaprenyl-pyrophosphoryl-MurNAc-pentapeptide (lipid intermediate I) to form undecaprenyl-pyrophosphoryl-MurNAc-(pentapeptide)GlcNAc (lipid intermediate II). The chain is UDP-N-acetylglucosamine--N-acetylmuramyl-(pentapeptide) pyrophosphoryl-undecaprenol N-acetylglucosamine transferase from Rickettsia massiliae (strain Mtu5).